An 827-amino-acid polypeptide reads, in one-letter code: Transcription factor SOX-6 (827 aa).

Residues 1-10 (MSSKQATSPF) are compositionally biased toward polar residues. The segment at 1–51 (MSSKQATSPFACTADGEEAMTQDLTSREKEEGSDQHPASHLPLHPIMHNKP) is disordered. A compositionally biased stretch (basic and acidic residues) spans 25–34 (TSREKEEGSD). Thr119 bears the Phosphothreonine mark. Residues 184–262 (LAEKERQLST…LLQQQIQVQG (79 aa)) are a coiled coil. 2 disordered regions span residues 334-361 (QINPRLKGISDRFGRNLDPSEHGGGHSY) and 379-470 (VSPG…PIGG). Residues 341 to 357 (GISDRFGRNLDPSEHGG) are compositionally biased toward basic and acidic residues. Ser399 is modified (phosphoserine). Phosphothreonine is present on Thr401. Residues Lys404 and Lys417 each participate in a glycyl lysine isopeptide (Lys-Gly) (interchain with G-Cter in SUMO) cross-link. 2 stretches are compositionally biased toward polar residues: residues 421 to 431 (TAQPLNLSSRP) and 439 to 461 (SPTSPTQNLFPASKTSPVNLPNK). Phosphoserine occurs at positions 439 and 442. A DNA-binding region (HMG box) is located at residues 620-688 (IKRPMNAFMV…IHLEKYPNYK (69 aa)). 2 disordered regions span residues 752–772 (TPSPQMTSDCSSTSASPEPSL) and 786–827 (ASLA…VSAN). Residues 795 to 808 (NGEDEMEAYDDYED) are compositionally biased toward acidic residues.

In terms of assembly, homodimer. Interacts with DAZAP2. May interact with CENPK. In terms of processing, sumoylation inhibits the transcriptional activity. As to expression, highly expressed in testis.

The protein localises to the nucleus. The protein resides in the cytoplasm. Transcription factor that plays a key role in several developmental processes, including neurogenesis, chondrocytes differentiation and cartilage formation. Specifically binds the 5'-AACAAT-3' DNA motif present in enhancers and super-enhancers and promotes expression of genes important for chondrogenesis. Required for overt chondrogenesis when condensed prechondrocytes differentiate into early stage chondrocytes: SOX5 and SOX6 cooperatively bind with SOX9 on active enhancers and super-enhancers associated with cartilage-specific genes, and thereby potentiate SOX9's ability to transactivate. Not involved in precartilaginous condensation, the first step in chondrogenesis, during which skeletal progenitors differentiate into prechondrocytes. Together with SOX5, required to form and maintain a pool of highly proliferating chondroblasts between epiphyses and metaphyses, to form columnar chondroblasts, delay chondrocyte prehypertrophy but promote hypertrophy, and to delay terminal differentiation of chondrocytes on contact with ossification fronts. Binds to the proximal promoter region of the myelin protein MPZ gene, and is thereby involved in the differentiation of oligodendroglia in the developing spinal tube. Binds to the gene promoter of MBP and acts as a transcriptional repressor. The chain is Transcription factor SOX-6 from Mus musculus (Mouse).